The chain runs to 57 residues: DNA-directed RNA polymerase subunit Rpo6 (57 aa).

Belongs to the archaeal Rpo6/eukaryotic RPB6 RNA polymerase subunit family. Part of the RNA polymerase complex.

The protein resides in the cytoplasm. It carries out the reaction RNA(n) + a ribonucleoside 5'-triphosphate = RNA(n+1) + diphosphate. Functionally, DNA-dependent RNA polymerase (RNAP) catalyzes the transcription of DNA into RNA using the four ribonucleoside triphosphates as substrates. This is DNA-directed RNA polymerase subunit Rpo6 from Thermococcus onnurineus (strain NA1).